The following is a 502-amino-acid chain: Nucleoside transporter 2 (502 aa).

Topologically, residues 1-30 (MTTSSDSAMVNHTPSPWYKFGFKSFAEFNT) are cytoplasmic. The helical transmembrane segment at 31-51 (YVTFVFLGMSIMMVASAVTSA) threads the bilayer. Over 52–81 (PDFLTRYYVYATGDPDAVAETPLFWNNANT) the chain is Extracellular. A helical transmembrane segment spans residues 82 to 102 (FYNAGTYVLQVLTELFSLTPF). Residues 103–111 (MRRIPLSVR) are Cytoplasmic-facing. The chain crosses the membrane as a helical span at residues 112–132 (LFVGLGIPFAELLLIIIVPAA). Residues 133 to 137 (TIKSQ) lie on the Extracellular side of the membrane. A helical transmembrane segment spans residues 138-158 (HGAIAVIMVVACVGGFSKALC). Residues 159–178 (DSCTNALVGPFPTKFMNGAQ) lie on the Cytoplasmic side of the membrane. Residues 179–199 (WGLTVIALLMSIIQIILKVSM) form a helical membrane-spanning segment. The Extracellular segment spans residues 200–210 (GTSFHDILTMS). Residues 211-231 (RIYFGICIGIQLFAIFELAIL) form a helical membrane-spanning segment. The Cytoplasmic portion of the chain corresponds to 232-352 (RFNPFAQKYI…SVFKRVYPML (121 aa)). The disordered stretch occupies residues 252–273 (AQNNESTLEETAPSMNEPAAGD). A helical transmembrane segment spans residues 353–373 (VCVFLIYFTSLLTFPGVFFLV). Topologically, residues 374-380 (STTSGWY) are extracellular. A helical transmembrane segment spans residues 381–401 (MTVIVTLFNAGDFISRMVLMF). Residues 402–408 (RPLRPSP) lie on the Cytoplasmic side of the membrane. A helical membrane pass occupies residues 409–429 (KVVVAGTLGRLIIIPFLVLCV). The Extracellular segment spans residues 430–436 (RGIIRGE). The chain crosses the membrane as a helical span at residues 437–457 (ALPYVLITLLGLTNGYFGCMA). The Cytoplasmic segment spans residues 458–477 (CIHCPRTTTLRYAGERSLAA). A helical membrane pass occupies residues 478-498 (MLSGISIMLGLCFGSNLSLAI). Over 499 to 502 (TLTH) the chain is Extracellular.

Belongs to the SLC29A/ENT transporter (TC 2.A.57) family.

It localises to the cell membrane. It carries out the reaction inosine(in) = inosine(out). The catalysed reaction is guanosine(in) = guanosine(out). In terms of biological role, high affinity transporter for inosine and guanosine. This Crithidia fasciculata protein is Nucleoside transporter 2.